Consider the following 225-residue polypeptide: Urease accessory protein UreF (225 aa).

It belongs to the UreF family. UreD, UreF and UreG form a complex that acts as a GTP-hydrolysis-dependent molecular chaperone, activating the urease apoprotein by helping to assemble the nickel containing metallocenter of UreC. The UreE protein probably delivers the nickel.

Its subcellular location is the cytoplasm. In terms of biological role, required for maturation of urease via the functional incorporation of the urease nickel metallocenter. The sequence is that of Urease accessory protein UreF from Geobacillus kaustophilus (strain HTA426).